The primary structure comprises 428 residues: Glutamate-1-semialdehyde 2,1-aminomutase 1 (428 aa).

Residue lysine 267 is modified to N6-(pyridoxal phosphate)lysine.

It belongs to the class-III pyridoxal-phosphate-dependent aminotransferase family. HemL subfamily. In terms of assembly, homodimer. Pyridoxal 5'-phosphate serves as cofactor.

It localises to the cytoplasm. The catalysed reaction is (S)-4-amino-5-oxopentanoate = 5-aminolevulinate. It functions in the pathway porphyrin-containing compound metabolism; protoporphyrin-IX biosynthesis; 5-aminolevulinate from L-glutamyl-tRNA(Glu): step 2/2. This chain is Glutamate-1-semialdehyde 2,1-aminomutase 1 (hemL1), found in Staphylococcus aureus (strain NCTC 8325 / PS 47).